We begin with the raw amino-acid sequence, 191 residues long: Fe/S biogenesis protein NfuA (191 aa).

[4Fe-4S] cluster is bound by residues Cys149 and Cys152.

This sequence belongs to the NfuA family. As to quaternary structure, homodimer. It depends on [4Fe-4S] cluster as a cofactor.

In terms of biological role, involved in iron-sulfur cluster biogenesis. Binds a 4Fe-4S cluster, can transfer this cluster to apoproteins, and thereby intervenes in the maturation of Fe/S proteins. Could also act as a scaffold/chaperone for damaged Fe/S proteins. In Hamiltonella defensa subsp. Acyrthosiphon pisum (strain 5AT), this protein is Fe/S biogenesis protein NfuA.